We begin with the raw amino-acid sequence, 331 residues long: Ketol-acid reductoisomerase (NADP(+)) (331 aa).

The region spanning 1–181 (MKMYYDADAD…GGTRAGVIET (181 aa)) is the KARI N-terminal Rossmann domain. NADP(+) contacts are provided by residues 24–27 (YGSQ), Arg-47, Ser-50, and 82–85 (DEKQ). His-107 is a catalytic residue. Gly-133 contributes to the NADP(+) binding site. Residues 182 to 327 (TFREETETDL…KKLRAMMPWL (146 aa)) enclose the KARI C-terminal knotted domain. Positions 190, 194, 226, and 230 each coordinate Mg(2+). Ser-251 lines the substrate pocket.

Belongs to the ketol-acid reductoisomerase family. Requires Mg(2+) as cofactor.

The catalysed reaction is (2R)-2,3-dihydroxy-3-methylbutanoate + NADP(+) = (2S)-2-acetolactate + NADPH + H(+). It carries out the reaction (2R,3R)-2,3-dihydroxy-3-methylpentanoate + NADP(+) = (S)-2-ethyl-2-hydroxy-3-oxobutanoate + NADPH + H(+). It functions in the pathway amino-acid biosynthesis; L-isoleucine biosynthesis; L-isoleucine from 2-oxobutanoate: step 2/4. Its pathway is amino-acid biosynthesis; L-valine biosynthesis; L-valine from pyruvate: step 2/4. Functionally, involved in the biosynthesis of branched-chain amino acids (BCAA). Catalyzes an alkyl-migration followed by a ketol-acid reduction of (S)-2-acetolactate (S2AL) to yield (R)-2,3-dihydroxy-isovalerate. In the isomerase reaction, S2AL is rearranged via a Mg-dependent methyl migration to produce 3-hydroxy-3-methyl-2-ketobutyrate (HMKB). In the reductase reaction, this 2-ketoacid undergoes a metal-dependent reduction by NADPH to yield (R)-2,3-dihydroxy-isovalerate. The sequence is that of Ketol-acid reductoisomerase (NADP(+)) from Heliobacterium modesticaldum (strain ATCC 51547 / Ice1).